A 201-amino-acid chain; its full sequence is Casparian strip membrane protein 7 (201 aa).

Residues 1-11 (MEAGEEIEDGE) are compositionally biased toward acidic residues. A disordered region spans residues 1 to 26 (MEAGEEIEDGEPSTPTYKAHHPPPHL). The Cytoplasmic portion of the chain corresponds to 1-34 (MEAGEEIEDGEPSTPTYKAHHPPPHLPPPMRSSG). Residues 35–55 (VSLVLSVADLVLRFVAIGGTA) form a helical membrane-spanning segment. Residues 56-86 (GSAIAMATTSETLPFAAPFVRFRAEYSDLPT) lie on the Extracellular side of the membrane. The chain crosses the membrane as a helical span at residues 87–107 (LMFFVVASSVVCAYLVLSLPA). Over 108 to 128 (SVVHVVRPGARSSRAILAFLD) the chain is Cytoplasmic. The chain crosses the membrane as a helical span at residues 129–149 (TVMLALLTASASAAAAIVYLA). Over 150–171 (HRGSARANWLGICQQFTSFCQR) the chain is Extracellular. Residues 172-192 (ITASLVGSFAAAVVLVALVFL) traverse the membrane as a helical segment. At 193 to 201 (SALSLARRA) the chain is on the cytoplasmic side.

This sequence belongs to the Casparian strip membrane proteins (CASP) family. As to quaternary structure, homodimer and heterodimers.

Its subcellular location is the cell membrane. In terms of biological role, regulates membrane-cell wall junctions and localized cell wall deposition. Required for establishment of the Casparian strip membrane domain (CSD) and the subsequent formation of Casparian strips, a cell wall modification of the root endodermis that determines an apoplastic barrier between the intraorganismal apoplasm and the extraorganismal apoplasm and prevents lateral diffusion. The sequence is that of Casparian strip membrane protein 7 from Oryza sativa subsp. japonica (Rice).